The sequence spans 687 residues: Adhesion G-protein coupled receptor G1 (687 aa).

Residues 1–25 form the signal peptide; that stretch reads MTAQSLLQTTLFLLSLLFLVQGAHG. 26-33 is a heparin binding site; it reads RGHREDFR. At 26–402 the chain is on the extracellular side; sequence RGHREDFRFC…VEVDAVHKHY (377 aa). Cystine bridges form between C35/C91 and C121/C177. Residues N39, N148, and N171 are each glycosylated (N-linked (GlcNAc...) asparagine). Residue 190 to 200 coordinates heparin; sequence LKHPQKASRRP. The 172-residue stretch at 224 to 395 folds into the GAIN-B domain; sequence DTVSFEEDRI…AVLMVSSVEV (172 aa). N234, N303, N324, and N341 each carry an N-linked (GlcNAc...) asparagine glycan. Disulfide bonds link C346-C377 and C366-C379. The interval 346-395 is GPS; the sequence is CVFWVEDPTLSSPGHWSSAGCETVRRETQTSCLCNHLTYFAVLMVSSVEV. Positions 384-397 are stachel; that stretch reads YFAVLMVSSVEVDA. The chain crosses the membrane as a helical span at residues 403–423; sequence LSLLSYVGCVVSALACVVTIA. Residues 424 to 442 are Cytoplasmic-facing; it reads AYLCSRRKPRDYTIKVHMN. A helical transmembrane segment spans residues 443-463; sequence LLLAVFLLDTSFLLSEPVALT. The Extracellular segment spans residues 464-470; the sequence is GSEAGCR. The helical transmembrane segment at 471–491 threads the bilayer; sequence ASAIFLHFSLLACLSWMGLEG. Topologically, residues 492-512 are cytoplasmic; sequence YNLYRLVVEVFGTYVPGYLLK. The helical transmembrane segment at 513-533 threads the bilayer; that stretch reads LSAMGWGFPIFLVTLVALVDV. Residues 534-570 are Extracellular-facing; sequence DNYGPIILAVHRTPEGVIYPSMCWIRDSLVSYITNLG. The chain crosses the membrane as a helical span at residues 571–591; that stretch reads LFSLVFLFNMAMLATMVVQIL. Residues 592-603 are Cytoplasmic-facing; the sequence is RLRPHTQKWSHV. The chain crosses the membrane as a helical span at residues 604–624; sequence LTLLGLSLVLGLPWALIFFSF. The Extracellular portion of the chain corresponds to 625–630; sequence ASGTFQ. A helical membrane pass occupies residues 631–651; the sequence is LVILYLFSIITSFQGFLIFIW. Topologically, residues 652 to 687 are cytoplasmic; the sequence is YWSMRLQARGGPSPLKSNSDSARLPISSGSTSSSRI. A disordered region spans residues 664-687; it reads SPLKSNSDSARLPISSGSTSSSRI. Low complexity predominate over residues 678–687; it reads SSGSTSSSRI.

Belongs to the G-protein coupled receptor 2 family. LN-TM7 subfamily. In terms of assembly, heterodimer of 2 chains generated by proteolytic processing; the large extracellular N-terminal fragment (ADGRG1 NT) and the membrane-bound C-terminal fragment (ADGRG1-CT) predominantly remain associated and non-covalently linked. ADGRG1 NT self-associates in a trans-trans manner; the homophilic interaction enhances receptor signaling. Interacts with TGM2. Interacts with heparin; leading to the reduction of ADGRG1 shedding. Interacts with COL3A1. Part of a GPCR-tetraspanin complex at least consisting of ADGRG1, CD81, eventually CD9, and GNA11 in which CD81 is enhancing the association of ADGRG1 with GNA11. In terms of processing, autoproteolytically cleaved into 2 fragments; the large extracellular N-terminal fragment (ADGRG1 NT) and the membrane-bound C-terminal fragment (ADGRG1 CT) predominantly remain associated and non-covalently linked. Shedding to yield the secreted ADGRG1 N-terminal fragment seems to involve metalloprotease(s). Ubiquitinated. Undergoes polyubiquitination upon activation.

It localises to the cell membrane. The protein localises to the secreted. The protein resides in the membrane raft. With respect to regulation, forms a heterodimer of 2 chains generated by proteolytic processing that remain associated through non-covalent interactions mediated by the GAIN-B domain. In the inactivated receptor, the Stachel sequence (also named stalk) is embedded in the GAIN-B domain, where it adopts a beta-strand conformation. On activation, the Stachel moves into the 7 transmembrane region and adopts a twisted hook-shaped configuration that forms contacts within the receptor, leading to coupling of a G-alpha protein, which activates signaling. The cleaved GAIN-B and N-terminal domains can then dissociate from the rest of the receptor. Functionally, adhesion G-protein coupled receptor (aGPCR) for steroid hormone 17alpha-hydroxypregnenolone (17-OH), which is involved in cell adhesion and cell-cell interactions. Ligand binding causes a conformation change that triggers signaling via guanine nucleotide-binding proteins (G proteins) and modulates the activity of downstream effectors, such as RhoA pathway. ADGRG1 is coupled to G(12) and/or G(13) G proteins (GNA12 and GNA13, respectively) and mediates the activation Rho small GTPases. Acts as a potent suppressor of ferroptosis: binding to 17-OH-binding initiates signaling that down-regulates CD36 and alleviates ferroptosis-induced liver injury. Ligand-binding also induces cell adhesion activity via association with proteins such as collagen III/COL3A1 and TGM2. Mediates cell matrix adhesion in developing neurons and hematopoietic stem cells. Involved in cortical development, specifically in maintenance of the pial basement membrane integrity and in cortical lamination: association with COL3A1 in the developing brain inhibits neuronal migration via activation of the RhoA pathway. Together with TGM2, acts as a regulator of myelination and myelin repair in oligodendrocyte precursor cells. Acts as a hemostatic sensor of shear force: G protein-coupled receptor signaling is activated in response to shear force in platelets, promoting G(13) G protein signaling, and platelet shape change and aggregation in a COL3A1-dependent manner. Acts as an inhibitor of VEGFA production thereby inhibiting angiogenesis through a signaling pathway mediated by PRKCA. Plays a role in the maintenance of hematopoietic stem cells in bone marrow niche. Plays an essential role in testis development. The chain is Adhesion G-protein coupled receptor G1 (ADGRG1) from Pan troglodytes (Chimpanzee).